Reading from the N-terminus, the 502-residue chain is Beta-amyrin 28-monooxygenase CYP716A379 (502 aa).

Residues 3–23 (LITLLSALLVLAIVSLSTFFV) traverse the membrane as a helical; Signal-anchor for type II membrane protein segment. N-linked (GlcNAc...) asparagine glycosylation is found at Asn88 and Asn181. Cys444 provides a ligand contact to heme.

This sequence belongs to the cytochrome P450 family. Heme is required as a cofactor. In terms of tissue distribution, mainly expressed in flowers and flower buds, to a lesser extent in young leaves and, at low levels, in old leaves, stems and roots.

It localises to the membrane. It carries out the reaction beta-amyrin + 3 reduced [NADPH--hemoprotein reductase] + 3 O2 = oleanolate + 3 oxidized [NADPH--hemoprotein reductase] + 4 H2O + 4 H(+). It functions in the pathway secondary metabolite biosynthesis; terpenoid biosynthesis. Component of the oleanane-type triterpene saponins (e.g. saponarioside A and saponarioside B) biosynthetic pathway, leading to the production of natural products with detergent properties used as traditional sources of soap. An oxidoreductase that facilitates the oxidation of the methyl group to a carboxyl group at the C-28 position of beta-amyrin, resulting in the formation of oleanolic acid. Catalyzes also the subsequent oxidation of the methyl group to a&lt; carboxyl group at the C-16 alpha position of oleanolic acid, resulting in the formation of echinocystic acid. The polypeptide is Beta-amyrin 28-monooxygenase CYP716A379 (Saponaria officinalis (Common soapwort)).